Here is a 143-residue protein sequence, read N- to C-terminus: Large ribosomal subunit protein uL11 (143 aa).

The protein belongs to the universal ribosomal protein uL11 family. In terms of assembly, part of the ribosomal stalk of the 50S ribosomal subunit. Interacts with L10 and the large rRNA to form the base of the stalk. L10 forms an elongated spine to which L12 dimers bind in a sequential fashion forming a multimeric L10(L12)X complex. One or more lysine residues are methylated.

In terms of biological role, forms part of the ribosomal stalk which helps the ribosome interact with GTP-bound translation factors. This is Large ribosomal subunit protein uL11 from Verminephrobacter eiseniae (strain EF01-2).